A 310-amino-acid chain; its full sequence is Methionyl-tRNA formyltransferase (310 aa).

Residue 109 to 112 participates in (6S)-5,6,7,8-tetrahydrofolate binding; sequence SLLP.

It belongs to the Fmt family.

The enzyme catalyses L-methionyl-tRNA(fMet) + (6R)-10-formyltetrahydrofolate = N-formyl-L-methionyl-tRNA(fMet) + (6S)-5,6,7,8-tetrahydrofolate + H(+). In terms of biological role, attaches a formyl group to the free amino group of methionyl-tRNA(fMet). The formyl group appears to play a dual role in the initiator identity of N-formylmethionyl-tRNA by promoting its recognition by IF2 and preventing the misappropriation of this tRNA by the elongation apparatus. The polypeptide is Methionyl-tRNA formyltransferase (Pseudomonas putida (strain ATCC 47054 / DSM 6125 / CFBP 8728 / NCIMB 11950 / KT2440)).